The following is a 217-amino-acid chain: tRNA (guanine-N(7)-)-methyltransferase (217 aa).

The S-adenosyl-L-methionine site is built by E44, E69, D96, and D118. The active site involves D118. Substrate-binding positions include K122, D154, and T191–E194.

It belongs to the class I-like SAM-binding methyltransferase superfamily. TrmB family.

The enzyme catalyses guanosine(46) in tRNA + S-adenosyl-L-methionine = N(7)-methylguanosine(46) in tRNA + S-adenosyl-L-homocysteine. The protein operates within tRNA modification; N(7)-methylguanine-tRNA biosynthesis. Its function is as follows. Catalyzes the formation of N(7)-methylguanine at position 46 (m7G46) in tRNA. The polypeptide is tRNA (guanine-N(7)-)-methyltransferase (Bacillus cereus (strain G9842)).